The chain runs to 644 residues: Transcription factor cep-1 (644 aa).

The DNA-binding element occupies 223–418; that stretch reads EKWMEIDVLK…NFCEREDAKQ (196 aa). Zn(2+)-binding residues include cysteine 307, histidine 310, cysteine 361, and cysteine 365. Residues 528–555 form a required for tertiary structure stability of the protein region; the sequence is TNYSFRTLTLSTAEYTKVVEFLAREAKV.

The protein belongs to the p53 family. In terms of assembly, homodimer. Interacts (via C-terminus domain) with prmt-5; not methylated by prmt-5. Interacts with cbp-1 (via HAT domain); cep-1 transcriptional activity may be inhibited by interaction with methylated cbp-1. Component of a complex that contains prmt-5 and cbp-1. Interacts with ape-1; the interaction inhibits pro-apoptotic activity of cep-1. Zn(2+) is required as a cofactor. Post-translationally, phosphorylated in response to IR-induced DNA damage which is thought to be mediated by akt-1. Expressed in pharyngeal muscle and neurons.

It is found in the nucleus. Its function is as follows. Transcriptional activator that binds the same DNA consensus sequence as p53. Has a role in normal development to ensure proper meiotic chromosome segregation. Promotes apoptosis under conditions of cellular and genotoxic stress in response to DNA damage, hypoxia, or starvation. Regulates germline apoptosis in response to DNA damage. Its pro-apoptotic activity is inhibited when bound to ape-1 in vitro. Plays a role in cell cycle arrest in the germline in response to DNA damage by UV-C light. However, not required for survival in response to DNA damage induced by UV-C light, indicating that it is unlikely to be involved in DNA repair. Required for induction of ced-13 in response to DNA damage. Regulates DNA damage-induced apoptosis by inducing transcription of the programmed cell death activator egl-1. Regulates germline proliferation by activating phg-1. Modulates lifespan. The chain is Transcription factor cep-1 from Caenorhabditis elegans.